The following is a 411-amino-acid chain: Arginine deiminase (411 aa).

Cysteine 401 acts as the Amidino-cysteine intermediate in catalysis.

The protein belongs to the arginine deiminase family.

The protein resides in the cytoplasm. The catalysed reaction is L-arginine + H2O = L-citrulline + NH4(+). It participates in amino-acid degradation; L-arginine degradation via ADI pathway; carbamoyl phosphate from L-arginine: step 1/2. The protein is Arginine deiminase of Streptococcus pyogenes serotype M2 (strain MGAS10270).